A 177-amino-acid chain; its full sequence is Large ribosomal subunit protein uL6 (177 aa).

This sequence belongs to the universal ribosomal protein uL6 family. In terms of assembly, part of the 50S ribosomal subunit.

In terms of biological role, this protein binds to the 23S rRNA, and is important in its secondary structure. It is located near the subunit interface in the base of the L7/L12 stalk, and near the tRNA binding site of the peptidyltransferase center. The chain is Large ribosomal subunit protein uL6 from Cupriavidus metallidurans (strain ATCC 43123 / DSM 2839 / NBRC 102507 / CH34) (Ralstonia metallidurans).